Consider the following 176-residue polypeptide: MAAPVLLRVSVPRWERVARYAVCAAGILLSIYAYHVEREKERDPEHRALCDLGPWVKCSAALASRWGRGFGLLGSIFGKDGVLNQPNSVFGLIFYILQLLLGMTASAVAALILMTSSIMSVVGSLYLAYILYFVLKEFCIICIVTYVLNFLLLIINYKRLVYLNEAWKRQLQPKQD.

Residues methionine 1–arginine 13 are Cytoplasmic-facing. A helical transmembrane segment spans residues tryptophan 14–valine 36. At glutamate 37–asparagine 87 the chain is on the lumenal side. The cysteines at positions 50 and 58 are disulfide-linked. Asparagine 87 contributes to the (S)-warfarin binding site. The chain crosses the membrane as a helical span at residues serine 88–glycine 102. Residues methionine 103–alanine 107 are Cytoplasmic-facing. A helical membrane pass occupies residues valine 108 to leucine 135. At lysine 136–phenylalanine 138 the chain is on the lumenal side. Cysteine 139 and cysteine 142 are disulfide-bonded. The helical transmembrane segment at cysteine 139–leucine 160 threads the bilayer. The phylloquinone site is built by cysteine 142 and tyrosine 146. Tyrosine 146 provides a ligand contact to (S)-warfarin. The Cytoplasmic portion of the chain corresponds to valine 161–aspartate 176.

This sequence belongs to the VKOR family.

Its subcellular location is the endoplasmic reticulum membrane. It catalyses the reaction phylloquinone + [protein]-disulfide + H2O = 2,3-epoxyphylloquinone + [protein]-dithiol. The enzyme catalyses phylloquinol + [protein]-disulfide = phylloquinone + [protein]-dithiol. Inhibited by warfarin (coumadin). Warfarin locks VKORC1 in both redox states into the closed conformation. Functionally, involved in vitamin K metabolism. Can reduce inactive vitamin K 2,3-epoxide to active vitamin K, and may contribute to vitamin K-mediated protection against oxidative stress. Plays a role in vitamin K-dependent gamma-carboxylation of Glu residues in target proteins. The polypeptide is Vitamin K epoxide reductase complex subunit 1-like protein 1 (VKORC1L1) (Homo sapiens (Human)).